The primary structure comprises 605 residues: Capsid scaffolding protein (605 aa).

Active-site charge relay system residues include histidine 52, serine 120, and histidine 139. Residues 326–344 are interaction with pAP; it reads GEFVLIPTAYYSQLLTGQT. The interaction with major capsid protein stretch occupies residues 585–605; that stretch reads IQGSTADDADMFANQMMVGRC.

The protein belongs to the herpesviridae capsid scaffolding protein family. In terms of assembly, homomultimer. Interacts with major capsid protein. Exists in a monomer-dimer equilibrium with the dimer being the active species. In terms of processing, capsid scaffolding protein is cleaved by assemblin after formation of the spherical procapsid. As a result, the capsid obtains its mature, icosahedral shape. Cleavages occur at two or more sites: release (R-site) and maturation (M-site).

It localises to the host cytoplasm. The protein resides in the host nucleus. The catalysed reaction is Cleaves -Ala-|-Ser- and -Ala-|-Ala- bonds in the scaffold protein.. Functionally, acts as a scaffold protein by binding major capsid protein in the cytoplasm, inducing the nuclear localization of both proteins. Multimerizes in the nucleus such as major capsid protein forms the icosahedral T=16 capsid. Autocatalytic cleavage releases the assembly protein, and subsequently abolishes interaction with major capsid protein. Cleavages products are evicted from the capsid before or during DNA packaging. Its function is as follows. Protease that plays an essential role in virion assembly within the nucleus. Catalyzes the cleavage of the assembly protein after formation of the spherical procapsid. By that cleavage, the capsid matures and gains its icosahedral shape. The cleavage sites seem to include -Ala-Ser-, -Ala-Ala-, as well as Ala-Thr bonds. Assemblin and cleavages products are evicted from the capsid before or during DNA packaging. In terms of biological role, plays a major role in capsid assembly. Acts as a scaffold protein by binding major capsid protein. Multimerizes in the nucleus such as major capsid protein forms the icosahedral T=16 capsid. Cleaved by assemblin after capsid completion. The cleavages products are evicted from the capsid before or during DNA packaging. The protein is Capsid scaffolding protein (33) of Varicella-zoster virus (strain Dumas) (HHV-3).